A 174-amino-acid chain; its full sequence is Interleukin-10 (174 aa).

A signal peptide spans 1-16 (MPTWMLLFCLLCVTSS). N-linked (GlcNAc...) asparagine glycosylation is present at asparagine 17. 2 cysteine pairs are disulfide-bonded: cysteine 26/cysteine 122 and cysteine 76/cysteine 128.

The protein belongs to the IL-10 family. As to quaternary structure, homodimer. Interacts with IL10RA and IL10RB.

The protein localises to the secreted. Its function is as follows. Major immune regulatory cytokine that acts on many cells of the immune system where it has profound anti-inflammatory functions, limiting excessive tissue disruption caused by inflammation. Mechanistically, IL10 binds to its heterotetrameric receptor comprising IL10RA and IL10RB leading to JAK1 and STAT2-mediated phosphorylation of STAT3. In turn, STAT3 translocates to the nucleus where it drives expression of anti-inflammatory mediators. Targets antigen-presenting cells (APCs) such as macrophages and monocytes and inhibits their release of pro-inflammatory cytokines including granulocyte-macrophage colony-stimulating factor /GM-CSF, granulocyte colony-stimulating factor/G-CSF, IL-1 alpha, IL-1 beta, IL-6, IL-8 and TNF-alpha. Also interferes with antigen presentation by reducing the expression of MHC-class II and co-stimulatory molecules, thereby inhibiting their ability to induce T cell activation. In addition, controls the inflammatory response of macrophages by reprogramming essential metabolic pathways including mTOR signaling. The sequence is that of Interleukin-10 (IL10) from Trichosurus vulpecula (Brush-tailed possum).